A 90-amino-acid polypeptide reads, in one-letter code: UPF0237 protein BL1209.1 (90 aa).

The ACT domain occupies 5-79 (IITVVGQDTV…DDIGVRIRCQ (75 aa)).

Belongs to the UPF0237 family.

This is UPF0237 protein BL1209.1 from Bifidobacterium longum (strain NCC 2705).